Consider the following 246-residue polypeptide: Octanoyltransferase (246 aa).

The BPL/LPL catalytic domain maps to 30–227 (GRIGNTLLLL…QFGRVFGHQV (198 aa)). Substrate is bound by residues 75–82 (RGGDVTYH), 155–157 (AIG), and 168–170 (GFA). Cys186 functions as the Acyl-thioester intermediate in the catalytic mechanism.

It belongs to the LipB family.

It is found in the cytoplasm. It carries out the reaction octanoyl-[ACP] + L-lysyl-[protein] = N(6)-octanoyl-L-lysyl-[protein] + holo-[ACP] + H(+). It functions in the pathway protein modification; protein lipoylation via endogenous pathway; protein N(6)-(lipoyl)lysine from octanoyl-[acyl-carrier-protein]: step 1/2. In terms of biological role, catalyzes the transfer of endogenously produced octanoic acid from octanoyl-acyl-carrier-protein onto the lipoyl domains of lipoate-dependent enzymes. Lipoyl-ACP can also act as a substrate although octanoyl-ACP is likely to be the physiological substrate. The polypeptide is Octanoyltransferase (Acidobacterium capsulatum (strain ATCC 51196 / DSM 11244 / BCRC 80197 / JCM 7670 / NBRC 15755 / NCIMB 13165 / 161)).